The chain runs to 152 residues: Large ribosomal subunit protein bL9 (152 aa).

It belongs to the bacterial ribosomal protein bL9 family.

Binds to the 23S rRNA. This Corynebacterium urealyticum (strain ATCC 43042 / DSM 7109) protein is Large ribosomal subunit protein bL9.